Consider the following 490-residue polypeptide: Cytochrome P450 2C39 (490 aa).

The N-terminal stretch at 1–25 is a signal peptide; the sequence is MDLVTFLVLTLSSLILLSLWRQSCG. Cys-435 is a heme binding site.

The protein belongs to the cytochrome P450 family. Heme serves as cofactor. In terms of tissue distribution, liver.

The protein resides in the endoplasmic reticulum membrane. The protein localises to the microsome membrane. It catalyses the reaction an organic molecule + reduced [NADPH--hemoprotein reductase] + O2 = an alcohol + oxidized [NADPH--hemoprotein reductase] + H2O + H(+). It carries out the reaction (5Z,8Z,11Z,14Z)-eicosatetraenoate + reduced [NADPH--hemoprotein reductase] + O2 = 11,12-epoxy-(5Z,8Z,14Z)-eicosatrienoate + oxidized [NADPH--hemoprotein reductase] + H2O + H(+). The catalysed reaction is (5Z,8Z,11Z,14Z)-eicosatetraenoate + reduced [NADPH--hemoprotein reductase] + O2 = 14,15-epoxy-(5Z,8Z,11Z)-eicosatrienoate + oxidized [NADPH--hemoprotein reductase] + H2O + H(+). It functions in the pathway lipid metabolism; arachidonate metabolism. Its function is as follows. A cytochrome P450 monooxygenase that primarily catalyzes the epoxidation of 11,12 and 14,15 double bonds of (5Z,8Z,11Z,14Z)-eicosatetraenoic acid (arachidonate) forming 11,12- and 14,15-epoxyeicosatrienoic acids (11,12- and 14,15-EET) regioisomers. Mechanistically, uses molecular oxygen inserting one oxygen atom into a substrate, and reducing the second into a water molecule, with two electrons provided by NADPH via cytochrome P450 reductase (CPR; NADPH--hemoprotein reductase). This chain is Cytochrome P450 2C39, found in Mus musculus (Mouse).